Reading from the N-terminus, the 755-residue chain is Serine/threonine-protein kinase GA29083 (755 aa).

The segment covering 18-52 (QASASGSGTPKKTAASSAAAQNSKQLLDQLSQQQK) has biased composition (low complexity). Residues 18–128 (QASASGSGTP…GSANTNGSAS (111 aa)) form a disordered region. Basic and acidic residues-rich tracts occupy residues 53-66 (AQEE…RDCD) and 74-84 (EPEKDLDELRD). Positions 87–99 (GSLTGSGSVGKSN) are enriched in polar residues. Low complexity predominate over residues 100 to 128 (GSLSGASSTTSAPAGTSTPGSANTNGSAS). Doublecortin domains follow at residues 157–243 (HRIK…VDYN) and 314–397 (RIVT…VEDF). A Protein kinase domain is found at 484-742 (YTLSQIIGDG…SEDILDHYWT (259 aa)). Residues 490–498 (IGDGNFAIV) and K513 each bind ATP. D605 serves as the catalytic Proton acceptor.

It belongs to the protein kinase superfamily. CAMK Ser/Thr protein kinase family. CaMK subfamily.

The enzyme catalyses L-seryl-[protein] + ATP = O-phospho-L-seryl-[protein] + ADP + H(+). The catalysed reaction is L-threonyl-[protein] + ATP = O-phospho-L-threonyl-[protein] + ADP + H(+). In Drosophila pseudoobscura pseudoobscura (Fruit fly), this protein is Serine/threonine-protein kinase GA29083.